The primary structure comprises 201 residues: Thymidylate kinase (201 aa).

7–14 (GIDGSGKS) provides a ligand contact to ATP.

It belongs to the thymidylate kinase family.

The enzyme catalyses dTMP + ATP = dTDP + ADP. Functionally, phosphorylation of dTMP to form dTDP in both de novo and salvage pathways of dTTP synthesis. The chain is Thymidylate kinase from Thermosipho africanus (strain TCF52B).